Reading from the N-terminus, the 176-residue chain is Peptide methionine sulfoxide reductase MsrA (176 aa).

C14 is a catalytic residue.

This sequence belongs to the MsrA Met sulfoxide reductase family.

The enzyme catalyses L-methionyl-[protein] + [thioredoxin]-disulfide + H2O = L-methionyl-(S)-S-oxide-[protein] + [thioredoxin]-dithiol. It catalyses the reaction [thioredoxin]-disulfide + L-methionine + H2O = L-methionine (S)-S-oxide + [thioredoxin]-dithiol. Functionally, has an important function as a repair enzyme for proteins that have been inactivated by oxidation. Catalyzes the reversible oxidation-reduction of methionine sulfoxide in proteins to methionine. The sequence is that of Peptide methionine sulfoxide reductase MsrA from Halalkalibacterium halodurans (strain ATCC BAA-125 / DSM 18197 / FERM 7344 / JCM 9153 / C-125) (Bacillus halodurans).